A 429-amino-acid chain; its full sequence is Histidine--tRNA ligase (429 aa).

The protein belongs to the class-II aminoacyl-tRNA synthetase family. Homodimer.

It is found in the cytoplasm. The catalysed reaction is tRNA(His) + L-histidine + ATP = L-histidyl-tRNA(His) + AMP + diphosphate + H(+). The polypeptide is Histidine--tRNA ligase (Pseudomonas paraeruginosa (strain DSM 24068 / PA7) (Pseudomonas aeruginosa (strain PA7))).